The chain runs to 415 residues: G2/mitotic-specific cyclin cig1 (415 aa).

2 disordered regions span residues 54–74 (PTLIEGNNESSISSSTGDTFE) and 86–118 (EERSIRSTPKSIGDDDLENREGSFDAPEGILTH). Over residues 57–71 (IEGNNESSISSSTGD) the composition is skewed to low complexity. Serine 96 carries the phosphoserine modification.

This sequence belongs to the cyclin family. Cyclin G subfamily.

Functionally, required for efficient passage of the G1/S transition. The protein is G2/mitotic-specific cyclin cig1 (cig1) of Schizosaccharomyces pombe (strain 972 / ATCC 24843) (Fission yeast).